We begin with the raw amino-acid sequence, 320 residues long: Annexin A5 (320 aa).

An N-acetylalanine modification is found at Ala-2. Annexin repeat units follow at residues 15-86 (FDER…ALMK), 87-158 (PSRL…VLLQ), 170-242 (AQVE…AVVK), and 246-317 (SIPA…LLCG). Lys-29 participates in a covalent cross-link: Glycyl lysine isopeptide (Lys-Gly) (interchain with G-Cter in SUMO1); alternate. A Glycyl lysine isopeptide (Lys-Gly) (interchain with G-Cter in SUMO2); alternate cross-link involves residue Lys-29. Residue Ser-37 is modified to Phosphoserine. Residues Lys-70, Lys-76, Lys-79, Lys-97, and Lys-101 each carry the N6-acetyllysine modification. Lys-290 carries the post-translational modification N6-succinyllysine. The short motif at 314-319 (LLCGED) is the [IL]-x-C-x-x-[DE] motif element.

The protein belongs to the annexin family. In terms of assembly, monomer. Binds ATRX and EIF5B. Interacts with hepatitis B virus (HBV). Post-translationally, S-nitrosylation is induced by interferon-gamma and oxidatively-modified low-densitity lipoprotein (LDL(ox)) possibly implicating the iNOS-S100A8/9 transnitrosylase complex.

Functionally, this protein is an anticoagulant protein that acts as an indirect inhibitor of the thromboplastin-specific complex, which is involved in the blood coagulation cascade. The chain is Annexin A5 (ANXA5) from Homo sapiens (Human).